Consider the following 232-residue polypeptide: 5'-methylthioadenosine/S-adenosylhomocysteine nucleosidase (232 aa).

Glu14 serves as the catalytic Proton acceptor. Residues Gly80, Val154, and Met175–Glu176 each bind substrate. The active-site Proton donor is the Asp199.

The protein belongs to the PNP/UDP phosphorylase family. MtnN subfamily.

It carries out the reaction S-adenosyl-L-homocysteine + H2O = S-(5-deoxy-D-ribos-5-yl)-L-homocysteine + adenine. It catalyses the reaction S-methyl-5'-thioadenosine + H2O = 5-(methylsulfanyl)-D-ribose + adenine. The catalysed reaction is 5'-deoxyadenosine + H2O = 5-deoxy-D-ribose + adenine. It functions in the pathway amino-acid biosynthesis; L-methionine biosynthesis via salvage pathway; S-methyl-5-thio-alpha-D-ribose 1-phosphate from S-methyl-5'-thioadenosine (hydrolase route): step 1/2. In terms of biological role, catalyzes the irreversible cleavage of the glycosidic bond in both 5'-methylthioadenosine (MTA) and S-adenosylhomocysteine (SAH/AdoHcy) to adenine and the corresponding thioribose, 5'-methylthioribose and S-ribosylhomocysteine, respectively. Also cleaves 5'-deoxyadenosine, a toxic by-product of radical S-adenosylmethionine (SAM) enzymes, into 5-deoxyribose and adenine. The protein is 5'-methylthioadenosine/S-adenosylhomocysteine nucleosidase of Haemophilus ducreyi (strain 35000HP / ATCC 700724).